We begin with the raw amino-acid sequence, 429 residues long: Gamma-glutamyl phosphate reductase (429 aa).

This sequence belongs to the gamma-glutamyl phosphate reductase family.

It is found in the cytoplasm. The enzyme catalyses L-glutamate 5-semialdehyde + phosphate + NADP(+) = L-glutamyl 5-phosphate + NADPH + H(+). It functions in the pathway amino-acid biosynthesis; L-proline biosynthesis; L-glutamate 5-semialdehyde from L-glutamate: step 2/2. Its function is as follows. Catalyzes the NADPH-dependent reduction of L-glutamate 5-phosphate into L-glutamate 5-semialdehyde and phosphate. The product spontaneously undergoes cyclization to form 1-pyrroline-5-carboxylate. The chain is Gamma-glutamyl phosphate reductase from Sphingopyxis alaskensis (strain DSM 13593 / LMG 18877 / RB2256) (Sphingomonas alaskensis).